We begin with the raw amino-acid sequence, 1635 residues long: Cortactin-binding protein 2 (1635 aa).

Disordered regions lie at residues 1–20 (MATAGGSGQPLCSGPPARTS), 193–219 (ASKLDAEKRKTGELEGALSAERQKSSQ), 264–469 (EQLR…DNLV), and 483–582 (SRFT…PHGI). Residues 116–273 (RKMQERMSAQ…EQLRKGNDHK (158 aa)) adopt a coiled-coil conformation. 2 stretches are compositionally biased toward basic and acidic residues: residues 193 to 205 (ASKLDAEKRKTGE) and 264 to 274 (EQLRKGNDHKP). Low complexity-rich tracts occupy residues 320–331 (PPVAVPAKPSSA) and 375–395 (GPSSGSTPEPTGSALMPLLNN). Residues 402–414 (SQNHSLTSSTPNL) are compositionally biased toward polar residues. Over residues 439–453 (QGNANDQDQNGNTTQ) the composition is skewed to low complexity. The segment covering 454–466 (SPPSREVSPTSRD) has biased composition (polar residues). An Asymmetric dimethylarginine modification is found at Arg-484. 6 ANK repeats span residues 697–727 (GRPTRLHQAAAQGNVTLLSVLLNEEGLDINH), 731–760 (DGSSALYSAAKNGHTDCVRLLLNANAQVDD), 764–793 (NGFTPLCSAAAQGHVKCAELLIAYHADINH), 797–826 (GGQTPLYLACKNGNNECIKLLLEAGTDRSI), 830–859 (DGWTPVHAAVDSGNVDSLTLLMYYGGPESE), and 893–923 (EGWTAAHIAASKGLKNCLEILCGHGRLEAER). The interval 856–876 (PESENSGSKDQTGLGSREESR) is disordered. The span at 858–869 (SENSGSKDQTGL) shows a compositional bias: polar residues. Residues 1420 to 1469 (SHRKKGESGSWRKVNTSPRKKSGLSSSQTWTKQEATKDGVRNDTGHQNGN) are disordered. A compositionally biased stretch (polar residues) spans 1432–1452 (KVNTSPRKKSGLSSSQTWTKQ). Over residues 1453–1463 (EATKDGVRNDT) the composition is skewed to basic and acidic residues. Ser-1498 carries the post-translational modification Phosphoserine. The tract at residues 1531 to 1624 (RMFGSSRTDP…RQREINNNLK (94 aa)) is disordered. Composition is skewed to polar residues over residues 1546–1555 (PTMSDRSLPS) and 1563–1577 (LSSNPTLECSNNTPK). A compositionally biased stretch (basic and acidic residues) spans 1615–1624 (RQREINNNLK).

As to quaternary structure, interacts with CTTN/cortactin SH3 domain. Interacts with STRN, STRN4/zinedin and MOB4/phocein; this interactions mediate the association with the STRIPAK core complex and may regulate dendritic spine distribution of the STRIPAK complex in hippocampal neurons. Activation of glutamate receptors weakens the interaction with STRN and STRN4.

Its subcellular location is the cytoplasm. The protein resides in the cell cortex. The protein localises to the cell projection. It localises to the dendritic spine. In terms of biological role, regulates the dendritic spine distribution of CTTN/cortactin in hippocampal neurons, and thus controls dendritic spinogenesis and dendritic spine maintenance. Associates with the striatin-interacting phosphatase and kinase (STRIPAK) core complex to regulate dendritic spine distribution of the STRIPAK complex in hippocampal neurons. The polypeptide is Cortactin-binding protein 2 (CTTNBP2) (Ornithorhynchus anatinus (Duckbill platypus)).